A 222-amino-acid polypeptide reads, in one-letter code: Probable transaldolase (222 aa).

The active-site Schiff-base intermediate with substrate is the K91.

The protein belongs to the transaldolase family. Type 3B subfamily.

The protein localises to the cytoplasm. The catalysed reaction is D-sedoheptulose 7-phosphate + D-glyceraldehyde 3-phosphate = D-erythrose 4-phosphate + beta-D-fructose 6-phosphate. The protein operates within carbohydrate degradation; pentose phosphate pathway; D-glyceraldehyde 3-phosphate and beta-D-fructose 6-phosphate from D-ribose 5-phosphate and D-xylulose 5-phosphate (non-oxidative stage): step 2/3. Its function is as follows. Transaldolase is important for the balance of metabolites in the pentose-phosphate pathway. The polypeptide is Probable transaldolase (Chlorobium chlorochromatii (strain CaD3)).